Here is a 2255-residue protein sequence, read N- to C-terminus: Non-reducing polyketide synthase nvfA (2255 aa).

The N-terminal acylcarrier protein transacylase domain (SAT) stretch occupies residues 13 to 251 (ILFGPQSSDM…HHPDHTAAVE (239 aa)). Residues 365 to 781 (VRPIAVTGMA…GSNAAIVLRQ (417 aa)) enclose the Ketosynthase family 3 (KS3) domain. Catalysis depends on for beta-ketoacyl synthase activity residues cysteine 530, histidine 665, and histidine 704. Residues 887-1187 (LCFGGQNGNT…QASDLKSPQA (301 aa)) form a malonyl-CoA:ACP transacylase (MAT) domain region. Serine 974 serves as the catalytic For acyl/malonyl transferase activity. The tract at residues 1229-1357 (EPMGLVQVLE…GRISLHPFDS (129 aa)) is N-terminal hotdog fold. Residues 1229–1536 (EPMGLVQVLE…FTSVSIRALT (308 aa)) form the PKS/mFAS DH domain. Residues 1232 to 1535 (GLVQVLEKRP…TFTSVSIRAL (304 aa)) are product template (PT) domain. Histidine 1262 functions as the Proton acceptor; for dehydratase activity in the catalytic mechanism. A C-terminal hotdog fold region spans residues 1385–1536 (SSSGLKGSAV…FTSVSIRALT (152 aa)). Aspartate 1443 serves as the catalytic Proton donor; for dehydratase activity. Positions 1581-1655 (TNKFPAIQAM…CLVQAIFPGA (75 aa)) constitute a Carrier domain. Serine 1615 carries the O-(pantetheine 4'-phosphoryl)serine modification. The tract at residues 1809–2042 (HHASEHTLLR…GYNWVNWSCN (234 aa)) is methyltransferase (CMeT) domain. Residues 2109-2227 (LLIHGGGHVM…ILSFYCPTDY (119 aa)) form a thioesterase (TE) domain region. Serine 2194 acts as the For thioesterase activity in catalysis.

It catalyses the reaction 3 malonyl-CoA + acetyl-CoA + 2 S-adenosyl-L-methionine = 3,5-dimethylorsellinate + 2 S-adenosyl-L-homocysteine + 3 CO2 + 4 CoA. The protein operates within secondary metabolite biosynthesis; terpenoid biosynthesis. Non-reducing polyketide synthase; part of the gene cluster that mediates the biosynthesis of novofumigatonin, a heavily oxygenated meroterpenoid containing a unique orthoester moiety. The first step of the pathway is the synthesis of 3,5-dimethylorsellinic acid (DMOA) by the polyketide synthase nvfA via condensation of one acetyl-CoA starter unit with 3 malonyl-CoA units and 2 methylations. DMOA is then converted to farnesyl-DMOA by the farnesyltransferase nvfB. Epoxydation by FAD-dependent monooxygenase nvfK, followed by a protonation-initiated cyclization catalyzed by the terpene cyclase nvfL leads to the production of asnavolin H. The short chain dehydrogenase nvfC then as a 3-OH dehydrogenase of asnovolin H to yield chemesin D. There are two branches to synthesize asnovolin A from chemesin D. In one branch, chemesin D undergoes Baeyer-Villiger oxidation by nvfH, methylation by nvfJ, and enoyl reduction by the nvfM D enoylreductase that reduces the double bond between C-5'and C-6', to form respectively asnovolin I, asnovolin K, and asnovolin A. In the other branch, the methylation precedes the Baeyer-Villiger oxidation and the enoyl reduction to yield asnovolin A via the asnovolin J intermediate. Asnovolin A is further converted to fumigatonoid A by the Fe(II)/2-oxoglutarate-dependent dioxygenase nvfI that catalyzes an endoperoxidation reaction. The alpha/beta hydrolase nvfD then acts as an epimerase that converts fumigatonoid A to its C-5' epimer, which then undergoes spontaneous or nvfD-catalyzed lactonization. The following step utilizes the ketoreductase nvfG to produce fumigatonoid B. The dioxygenase nvfE further converts fumigatonoid B into fumigatonoid C. Finally the Fe(II)/2-oxoglutarate-dependent dioxygenase nvfF catalyzes two rounds of oxidation to transform fumigatonoid C into the end product, novofumigatonin A. In Aspergillus novofumigatus (strain IBT 16806), this protein is Non-reducing polyketide synthase nvfA.